A 272-amino-acid polypeptide reads, in one-letter code: MSYLQESNRKAVTVTSLQAMRAAGERIVMLTAYDSSFAALMDRNGTDVLLVGDSLGNVMQGQKTTLPVTLEHIVYHTECVSRGTTKALLVSDLPFGTYGTPEQAFHSAVRVMQAGAQMVKLEGGVWLAPTIKFLVERSIPVCAHIGLTPQSVHAFGGFKVQGRGDEAAAQLKADALAVQDAGAQLVVMEAIPAGLAGEVTRLLAIPTIGIGAGLECSGQVLVMHDMLGVFPGHRPKFVRNFMDGQTTIDGAVAAYVAAVKDGTFPGPEHTFA.

Mg(2+) contacts are provided by Asp53 and Asp92. 3-methyl-2-oxobutanoate-binding positions include 53-54 (DS), Asp92, and Lys120. Glu122 contributes to the Mg(2+) binding site. Glu189 (proton acceptor) is an active-site residue.

It belongs to the PanB family. In terms of assembly, homodecamer; pentamer of dimers. Requires Mg(2+) as cofactor.

It localises to the cytoplasm. It carries out the reaction 3-methyl-2-oxobutanoate + (6R)-5,10-methylene-5,6,7,8-tetrahydrofolate + H2O = 2-dehydropantoate + (6S)-5,6,7,8-tetrahydrofolate. It functions in the pathway cofactor biosynthesis; (R)-pantothenate biosynthesis; (R)-pantoate from 3-methyl-2-oxobutanoate: step 1/2. Catalyzes the reversible reaction in which hydroxymethyl group from 5,10-methylenetetrahydrofolate is transferred onto alpha-ketoisovalerate to form ketopantoate. This chain is 3-methyl-2-oxobutanoate hydroxymethyltransferase, found in Ralstonia pickettii (strain 12J).